A 170-amino-acid polypeptide reads, in one-letter code: 6,7-dimethyl-8-ribityllumazine synthase (170 aa).

Residues Trp-25, 57-59, and 79-81 contribute to the 5-amino-6-(D-ribitylamino)uracil site; these read AVE and AVI. Residue 84–85 coordinates (2S)-2-hydroxy-3-oxobutyl phosphate; the sequence is DT. The active-site Proton donor is the His-87. Residue Asn-112 coordinates 5-amino-6-(D-ribitylamino)uracil. Arg-126 is a binding site for (2S)-2-hydroxy-3-oxobutyl phosphate.

The protein belongs to the DMRL synthase family.

It catalyses the reaction (2S)-2-hydroxy-3-oxobutyl phosphate + 5-amino-6-(D-ribitylamino)uracil = 6,7-dimethyl-8-(1-D-ribityl)lumazine + phosphate + 2 H2O + H(+). It functions in the pathway cofactor biosynthesis; riboflavin biosynthesis; riboflavin from 2-hydroxy-3-oxobutyl phosphate and 5-amino-6-(D-ribitylamino)uracil: step 1/2. Its function is as follows. Catalyzes the formation of 6,7-dimethyl-8-ribityllumazine by condensation of 5-amino-6-(D-ribitylamino)uracil with 3,4-dihydroxy-2-butanone 4-phosphate. This is the penultimate step in the biosynthesis of riboflavin. In Thermobifida fusca (strain YX), this protein is 6,7-dimethyl-8-ribityllumazine synthase.